The sequence spans 324 residues: Adipolin (324 aa).

The first 24 residues, 1–24, serve as a signal peptide directing secretion; sequence MRCWVWLLVAIVLCQQLSVVRVLA. 2 disordered regions span residues 28 to 66 and 83 to 121; these read ERKK…DPGL and GANS…MPGA. Residues 40 to 49 are compositionally biased toward polar residues; that stretch reads EPFNVSLSNS. Asn-43 carries N-linked (GlcNAc...) asparagine glycosylation. The segment covering 50–60 has biased composition (basic and acidic residues); the sequence is EELHETDKLSE. Over residues 86–98 the composition is skewed to basic residues; the sequence is SKKKCKGKDKKLR. The span at 103-118 shows a compositional bias: pro residues; sequence PPGPPGPQGPPGPPGM. The 156-residue stretch at 169–324 folds into the C1q domain; sequence YRRVDEGFHC…SDFMGILMGL (156 aa).

This sequence belongs to the adipolin/erythroferrone family. Homomultimer; disulfide-linked.

The protein localises to the secreted. Its function is as follows. Insulin-sensitizing adipocyte-secreted protein (adipokine) that regulates glucose metabolism in liver and adipose tissue. The chain is Adipolin (c1qtnf12) from Xenopus tropicalis (Western clawed frog).